The sequence spans 147 residues: Small ribosomal subunit protein uS12 (147 aa).

It belongs to the universal ribosomal protein uS12 family. As to quaternary structure, part of the 30S ribosomal subunit.

In terms of biological role, with S4 and S5 plays an important role in translational accuracy. Located at the interface of the 30S and 50S subunits. The polypeptide is Small ribosomal subunit protein uS12 (Methanococcus maripaludis (strain C5 / ATCC BAA-1333)).